The chain runs to 468 residues: MHYHIIGIAGAGMSAIAHILLDQGHTVSGSDVQRNALTEALEQRGALIHDGHDPAWIAGADALVATSAVRDDHVELSAARARGIPVLRRADLWREWSQQRRVVAVAGTHGKTTTTALIALMLTQAGGNPGFLIGGETPDLGIHARWGDPAAPLVVEADEYDRTFLALTPDVAVMTNVEWDHVDIYPSPDNYEAAFRLFTRRVAQPQRLIVCGDDPGALRVANHPDAQQYGIEEAIARNPASCRLAPMDWMAANVRYDGAMTNFDLWRYDRRTFGARLDGTYTMRLVGDHNVRNALAAIAVATLLGVERDAIADALAAYRGARRRFDIKGEANGITIIDDYAHHPTEARATLAAARARFPQRRLVVYLQPHTFSRTQALRDAWADAFDHADVVRIGDVYPARETGDPRTVAHALAGCIRHNDVQAVGNVVEAAATIGGLLRPGDVLLTLGAGDGYRVGELIIDTLRQQN.

107 to 113 (GTHGKTT) is an ATP binding site.

Belongs to the MurCDEF family.

Its subcellular location is the cytoplasm. It catalyses the reaction UDP-N-acetyl-alpha-D-muramate + L-alanine + ATP = UDP-N-acetyl-alpha-D-muramoyl-L-alanine + ADP + phosphate + H(+). The protein operates within cell wall biogenesis; peptidoglycan biosynthesis. Its function is as follows. Cell wall formation. The protein is UDP-N-acetylmuramate--L-alanine ligase of Roseiflexus sp. (strain RS-1).